We begin with the raw amino-acid sequence, 511 residues long: Maturase K (511 aa).

It belongs to the intron maturase 2 family. MatK subfamily.

The protein resides in the plastid. The protein localises to the chloroplast. Its function is as follows. Usually encoded in the trnK tRNA gene intron. Probably assists in splicing its own and other chloroplast group II introns. The chain is Maturase K from Hordeum murinum subsp. leporinum (Mouse barley).